We begin with the raw amino-acid sequence, 1131 residues long: Phytochrome a (1131 aa).

The span at 1–23 (MSSSRPAHSSSSSSRTRQSSQAR) shows a compositional bias: low complexity. The interval 1–26 (MSSSRPAHSSSSSSRTRQSSQARILA) is disordered. Positions 219-404 (SMEALCNTVV…VFAVHVNKEF (186 aa)) constitute a GAF domain. Phytochromobilin is bound at residue C324. PAS domains are found at residues 620-690 (VTSE…LQGK) and 750-834 (VEGD…LAGE). In terms of domain architecture, Histidine kinase spans 904–1124 (YMRHAINKPL…TFILTAELAA (221 aa)).

It belongs to the phytochrome family. In terms of assembly, homodimer. Contains one covalently linked phytochromobilin chromophore.

Regulatory photoreceptor which exists in two forms that are reversibly interconvertible by light: the Pr form that absorbs maximally in the red region of the spectrum and the Pfr form that absorbs maximally in the far-red region. Photoconversion of Pr to Pfr induces an array of morphogenic responses, whereas reconversion of Pfr to Pr cancels the induction of those responses. Pfr controls the expression of a number of nuclear genes including those encoding the small subunit of ribulose-bisphosphate carboxylase, chlorophyll A/B binding protein, protochlorophyllide reductase, rRNA, etc. It also controls the expression of its own gene(s) in a negative feedback fashion. The sequence is that of Phytochrome a (PHYA) from Sorghum bicolor (Sorghum).